Here is a 402-residue protein sequence, read N- to C-terminus: MSTETETHLGESKRVILSSLIKQLSPNKEIKHMVLPCFLLQPRSTLESFTDMFTYIDELYKINEIDDEGERFLQFVKFYLTGWHTRPKGICKPFNPVIGEEFECFWSNNKNEDLPHIDELIEDNNSDVGVFKAEQISHHPPLSAYVFYNKFQKILVNGNICPSYVKFMGNSAESHLQGILEFNFFKWNECFECTLPTVGVKGIILGKLSPFTCGDIEIKSKNSKYSCKLEFLFKGLFGSSKNINGIKGTILYDNKPIYKVRGNWDKQIFIKKINEIAGTHGGSSSGSHTNSTERCLMDVSLLKNSKEKYTKPIEQQPPNSSYHLWELVTKNINNNNDKETAEEKAKIEEKQRKEESERREKGILWEPKEFHFKENPNNEYKTTFYYNDIPKLFDNLQSKPIQ.

Residues 333–366 (NNNNDKETAEEKAKIEEKQRKEESERREKGILWE) are disordered. Over residues 336–366 (NDKETAEEKAKIEEKQRKEESERREKGILWE) the composition is skewed to basic and acidic residues.

It belongs to the OSBP family.

The protein is Oxysterol-binding protein 12 (osbL) of Dictyostelium discoideum (Social amoeba).